The chain runs to 197 residues: Probable GTP-binding protein EngB (197 aa).

Residues 25–197 (SAPEIAFAGR…VRDEFFKFTR (173 aa)) enclose the EngB-type G domain. Residues 33-40 (GRSNVGKS), 60-64 (GCTRQ), 79-82 (DLPG), 146-149 (TKID), and 177-179 (ISI) each bind GTP. Residues Ser-40 and Thr-62 each contribute to the Mg(2+) site.

This sequence belongs to the TRAFAC class TrmE-Era-EngA-EngB-Septin-like GTPase superfamily. EngB GTPase family. Mg(2+) is required as a cofactor.

Its function is as follows. Necessary for normal cell division and for the maintenance of normal septation. In Wolbachia pipientis subsp. Culex pipiens (strain wPip), this protein is Probable GTP-binding protein EngB.